A 342-amino-acid chain; its full sequence is UDP-3-O-acylglucosamine N-acyltransferase (342 aa).

His243 acts as the Proton acceptor in catalysis.

It belongs to the transferase hexapeptide repeat family. LpxD subfamily. In terms of assembly, homotrimer.

It carries out the reaction a UDP-3-O-[(3R)-3-hydroxyacyl]-alpha-D-glucosamine + a (3R)-hydroxyacyl-[ACP] = a UDP-2-N,3-O-bis[(3R)-3-hydroxyacyl]-alpha-D-glucosamine + holo-[ACP] + H(+). It participates in bacterial outer membrane biogenesis; LPS lipid A biosynthesis. Functionally, catalyzes the N-acylation of UDP-3-O-acylglucosamine using 3-hydroxyacyl-ACP as the acyl donor. Is involved in the biosynthesis of lipid A, a phosphorylated glycolipid that anchors the lipopolysaccharide to the outer membrane of the cell. This is UDP-3-O-acylglucosamine N-acyltransferase from Coxiella burnetii (strain CbuK_Q154) (Coxiella burnetii (strain Q154)).